The primary structure comprises 438 residues: MNVKKTENALSVTLKNFIKSESFGGIFLFLNAVLAMVVANSFLKESYFALWHTPFGFQIGDFFIGFSLHNWIDDVLMALFFLMIGLEIKRELLFGELSSFKKASFPVIAALGGMIAPGLIYFFLNADTPSQHGFGIPMATDIAFALGVIMLLGKRVPTALKVFLITLAVADDLGAIVVIALFYTTNLKFAWLLGALGVVLILAVLNRLNIRSLIPYLLLGVLLWFCVHQSGIHATIAAVVLAFMIPVKIPKDSKNVELLELGKRYAETSSGVLLTKEQQEILHSIEEKASALQSPLERLEHFLAPISGYFIMPLFAFANAGVSVDSSINLEVDKVLLGVILGLCLGKPLGIFLITFISEKLKITARPKGISWWHILGAGLLAGIGFTMSMFISNLAFTSEHKDAMEVAKIAILLGSLISGIIGALYLFVLDKRAALKK.

The next 11 membrane-spanning stretches (helical) occupy residues 23–43 (FGGI…NSFL), 62–82 (FFIG…LFFL), 104–124 (SFPV…YFFL), 133–153 (GFGI…MLLG), 162–182 (VFLI…IALF), 185–205 (TNLK…LAVL), 212–232 (SLIP…QSGI), 302–322 (FLAP…NAGV), 337–357 (LGVI…ITFI), 372–392 (WWHI…SMFI), and 410–430 (IAIL…LFVL).

It belongs to the NhaA Na(+)/H(+) (TC 2.A.33) antiporter family.

Its subcellular location is the cell inner membrane. It carries out the reaction Na(+)(in) + 2 H(+)(out) = Na(+)(out) + 2 H(+)(in). Na(+)/H(+) antiporter that extrudes sodium in exchange for external protons. In Helicobacter pylori (strain G27), this protein is Na(+)/H(+) antiporter NhaA.